A 1286-amino-acid polypeptide reads, in one-letter code: CLIP-associating protein 2 (1286 aa).

Positions 1-40 (MRRLICKRICDYKSFDDEESVDGNRPSSAASAFKVPAPKT) are golgi localization. 2 positions are modified to phosphoserine: serine 14 and serine 20. The interval 17–67 (DEESVDGNRPSSAASAFKVPAPKTPGNPVSSARKPGSAGGPKVGGPSKEGG) is disordered. The segment covering 53-67 (SAGGPKVGGPSKEGG) has biased composition (gly residues). Positions 66–317 (GGAGAVDEDD…KSLQTYLKSS (252 aa)) are TOG 1. HEAT repeat units follow at residues 179 to 214 (HGAE…IRHT), 215 to 251 (HVPR…EWQT), and 256 to 293 (RHAA…HFPG). A disordered region spans residues 320-374 (VASLPQSDRSSSSSQESLNRPFSSKWSTANPSTVAGRVSVGGSKANPLPGSLQRS). Phosphoserine occurs at positions 322, 333, and 336. Over residues 322–340 (SLPQSDRSSSSSQESLNRP) the composition is skewed to low complexity. Residues 341–352 (FSSKWSTANPST) show a composition bias toward polar residues. A phosphoserine mark is found at serine 374, serine 376, and serine 413. The interval 411–473 (YASLEDTSDK…GSRSGSPGRV (63 aa)) is disordered. A compositionally biased stretch (basic and acidic residues) spans 417–431 (TSDKMDGTASDDGRV). Residues 450 to 565 (RGRSRTKMVS…GPGYGISQSS (116 aa)) form an interaction with microtubules, MAPRE1 and MAPRE3 region. Positions 459–473 (SQSQPGSRSGSPGRV) are enriched in low complexity. 5 positions are modified to phosphoserine: serine 461, serine 465, serine 469, serine 484, and serine 495. The tract at residues 493–564 (SASAQKRSKI…LGPGYGISQS (72 aa)) is disordered. The SXIP motif 1; mediates interaction with MAPRE1 and targeting to microtubule plus ends motif lies at 500 to 503 (SKIP). At serine 513 the chain carries Phosphoserine. Positions 523–526 (SRIP) match the SXIP motif 2; mediates interaction with MAPRE1 and targeting to microtubule plus ends motif. Residues serine 531, serine 535, serine 570, serine 572, serine 581, serine 614, and serine 620 each carry the phosphoserine modification. Residues 605 to 616 (RRYESYGMHSDD) show a composition bias toward basic and acidic residues. The tract at residues 605 to 638 (RRYESYGMHSDDDANSDASSACSERSYSSRNGSI) is disordered. A compositionally biased stretch (low complexity) spans 620–634 (SDASSACSERSYSSR). The interval 642-873 (MRQTEDVAEV…TKLLHNHLRN (232 aa)) is TOG 2. 2 HEAT repeats span residues 702–739 (KVFS…KMGA) and 764–801 (LQFN…QMDP). Threonine 779 is modified (phosphothreonine). The tract at residues 864–1286 (TKLLHNHLRN…DPTADVSGQS (423 aa)) is interaction with RSN and localization to the Golgi and kinetochores. 2 disordered regions span residues 870–920 (HLRN…FDYD) and 944–989 (SFRS…SQPA). Polar residues-rich tracts occupy residues 872–884 (RNTG…SMGS) and 893–914 (SPAN…TLSP). Serine 884 is subject to Phosphoserine. 4 positions are modified to phosphoserine: serine 944, serine 947, serine 1005, and serine 1021. The span at 947 to 964 (SQEDMSEPVRRDPKKEDG) shows a compositional bias: basic and acidic residues. The segment at 1009 to 1286 (RDYNPYNYSD…DPTADVSGQS (278 aa)) is required for cortical localization. HEAT repeat units follow at residues 1046 to 1083 (LDHS…TQEE), 1090 to 1127 (EHFK…HQPA), and 1208 to 1245 (MLLP…VIGD).

The protein belongs to the CLASP family. In terms of assembly, interacts with microtubules. Interacts with MAPRE1; probably required for targeting to growing microtubule plus ends. Interacts with ERC1, MAPRE3 and PHLDB2. The interaction with ERC1 may be mediated by PHLDB2. Interacts with GCC2; recruits CLASP2 to Golgi membranes. Interacts with CLIP2 and RSN. Interacts with MACF1. Interacts with mtcl2. Interacts with MTCL1. Phosphorylated by GSK3B. Phosphorylation by GSK3B may negatively regulate binding to microtubule lattices in lamella. Isoform 2 is phosphorylated on Ser-241. As to expression, highly expressed in brain and at low levels in heart, kidney and lung.

Its subcellular location is the cytoplasm. It localises to the cytoskeleton. It is found in the microtubule organizing center. The protein resides in the centrosome. The protein localises to the chromosome. Its subcellular location is the centromere. It localises to the kinetochore. It is found in the spindle. The protein resides in the spindle pole. The protein localises to the golgi apparatus. Its subcellular location is the trans-Golgi network. It localises to the cell membrane. It is found in the cell projection. The protein resides in the ruffle membrane. The protein localises to the cell cortex. Microtubule plus-end tracking protein that promotes the stabilization of dynamic microtubules. Involved in the nucleation of noncentrosomal microtubules originating from the trans-Golgi network (TGN). Required for the polarization of the cytoplasmic microtubule arrays in migrating cells towards the leading edge of the cell. May act at the cell cortex to enhance the frequency of rescue of depolymerizing microtubules by attaching their plus-ends to cortical platforms composed of ERC1 and PHLDB2. This cortical microtubule stabilizing activity is regulated at least in part by phosphatidylinositol 3-kinase signaling. Also performs a similar stabilizing function at the kinetochore which is essential for the bipolar alignment of chromosomes on the mitotic spindle. Acts as a mediator of ERBB2-dependent stabilization of microtubules at the cell cortex. The protein is CLIP-associating protein 2 (Clasp2) of Mus musculus (Mouse).